We begin with the raw amino-acid sequence, 1337 residues long: GTPase activating protein homolog 3 (1337 aa).

The region spanning 14 to 264 (PESFADLWDG…LINSINNEDE (251 aa)) is the F-BAR domain. Disordered stretches follow at residues 279–328 (PKPF…LPIF) and 345–392 (ITNS…RFST). A compositionally biased stretch (pro residues) spans 293-302 (TPPPPPPPQI). Over residues 345–358 (ITNSLSLSSDSLQT) the composition is skewed to polar residues. Residues 422–611 (CKIEDIMVAQ…NIIEHFKPLQ (190 aa)) form the Rho-GAP domain. Disordered regions lie at residues 612–689 (VNDS…TTNT), 733–781 (VNNN…HTVA), and 794–821 (ITTPQKSIGDGNGLIGQSPSAHLMSPSE). Composition is skewed to low complexity over residues 621-637 (SSSSSSSTSINQSSIES), 645-687 (SSTN…SSTT), and 734-772 (NNNNQNQNQNQNQNQNQDQNQNQSKQPIQSSNQTQQQVS). Residues 830-859 (YLEDQERCKQRIDELHTQVNELYSDITTIE) are a coiled coil. 2 disordered regions span residues 1041 to 1102 (SDPD…INNS) and 1114 to 1166 (KSAL…AHAI). Polar residues predominate over residues 1047 to 1063 (SPPTISNTTNRLLNTSG). 2 stretches are compositionally biased toward low complexity: residues 1064-1102 (STDFSTTPLSSSPSTSSTSLSTNNNNNNNGNRNLDINNS) and 1114-1159 (KSAL…TTTN). Residues 1189–1219 (LEINNKLHSQLTEELKKKQQQYKQLIFDIID) adopt a coiled-coil conformation.

The protein resides in the cytoplasm. It is found in the contractile vacuole. In terms of biological role, rho GTPase-activating protein involved in the signal transduction pathway. In Dictyostelium discoideum (Social amoeba), this protein is GTPase activating protein homolog 3 (mgp3).